The primary structure comprises 178 residues: Large ribosomal subunit protein uL6 (178 aa).

It belongs to the universal ribosomal protein uL6 family. Part of the 50S ribosomal subunit.

In terms of biological role, this protein binds to the 23S rRNA, and is important in its secondary structure. It is located near the subunit interface in the base of the L7/L12 stalk, and near the tRNA binding site of the peptidyltransferase center. The polypeptide is Large ribosomal subunit protein uL6 (Corynebacterium jeikeium (strain K411)).